The sequence spans 315 residues: Lipoyl synthase (315 aa).

Residues cysteine 62, cysteine 67, cysteine 73, cysteine 88, cysteine 92, cysteine 95, and serine 302 each contribute to the [4Fe-4S] cluster site. One can recognise a Radical SAM core domain in the interval 74–292 (FNHGTATFMI…KIALKLGFIR (219 aa)).

This sequence belongs to the radical SAM superfamily. Lipoyl synthase family. The cofactor is [4Fe-4S] cluster.

It localises to the cytoplasm. It carries out the reaction [[Fe-S] cluster scaffold protein carrying a second [4Fe-4S](2+) cluster] + N(6)-octanoyl-L-lysyl-[protein] + 2 oxidized [2Fe-2S]-[ferredoxin] + 2 S-adenosyl-L-methionine + 4 H(+) = [[Fe-S] cluster scaffold protein] + N(6)-[(R)-dihydrolipoyl]-L-lysyl-[protein] + 4 Fe(3+) + 2 hydrogen sulfide + 2 5'-deoxyadenosine + 2 L-methionine + 2 reduced [2Fe-2S]-[ferredoxin]. Its pathway is protein modification; protein lipoylation via endogenous pathway; protein N(6)-(lipoyl)lysine from octanoyl-[acyl-carrier-protein]: step 2/2. Catalyzes the radical-mediated insertion of two sulfur atoms into the C-6 and C-8 positions of the octanoyl moiety bound to the lipoyl domains of lipoate-dependent enzymes, thereby converting the octanoylated domains into lipoylated derivatives. This Vesicomyosocius okutanii subsp. Calyptogena okutanii (strain HA) protein is Lipoyl synthase.